The primary structure comprises 549 residues: Myotubularin-related protein 9 (549 aa).

Met-1 is subject to N-acetylmethionine. A GRAM domain is found at 4-99; sequence AELIKTPRVD…LNIASSIEAL (96 aa). Residues 123-498 enclose the Myotubularin phosphatase domain; it reads GWHSFLPEQE…QSLPLWEGIF (376 aa). Residues 508–542 are a coiled coil; it reads LDEAYEEMVNIIEYNKELQAKVNILRRQLAELETE. Ser-548 bears the Phosphoserine mark.

The protein belongs to the protein-tyrosine phosphatase family. Non-receptor class myotubularin subfamily. As to quaternary structure, homodimer. Heterodimer (via C-terminus) with lipid phosphatase MTMR6 (via C-terminus). Heterodimer (via coiled coil domain) with lipid phosphatase MTMR7 (via C-terminus). Heterodimer with lipid phosphatase MTMR8. As to expression, expressed in many tissues.

It localises to the cytoplasm. It is found in the cell projection. The protein localises to the ruffle membrane. Its subcellular location is the perinuclear region. The protein resides in the endoplasmic reticulum. In terms of biological role, acts as an adapter for myotubularin-related phosphatases. Increases lipid phosphatase MTMR6 catalytic activity, specifically towards phosphatidylinositol 3,5-bisphosphate and MTMR6 binding affinity for phosphorylated phosphatidylinositols. Positively regulates lipid phosphatase MTMR7 catalytic activity. Increases MTMR8 catalytic activity towards phosphatidylinositol 3-phosphate. The formation of the MTMR6-MTMR9 complex, stabilizes both MTMR6 and MTMR9 protein levels. Stabilizes MTMR8 protein levels. Plays a role in the late stages of macropinocytosis possibly by regulating MTMR6-mediated dephosphorylation of phosphatidylinositol 3-phosphate in membrane ruffles. Negatively regulates autophagy, in part via its association with MTMR8. Negatively regulates DNA damage-induced apoptosis, in part via its association with MTMR6. Does not bind mono-, di- and tri-phosphorylated phosphatidylinositols, phosphatidic acid and phosphatidylserine. This Homo sapiens (Human) protein is Myotubularin-related protein 9 (MTMR9).